A 97-amino-acid polypeptide reads, in one-letter code: Protein E7 (97 aa).

The E7 terminal domain stretch occupies residues 1–40 (MRGHKPTLKEYVLDLYPEPTDLYCYEQLSDSSDEDEGLDR). The short motif at 22-26 (LYCYE) is the LXCXE motif; interaction with host RB1 and TMEM173/STING element. Residues 58-94 (CHTCNTTVRLCVNSTASDLRTIQQLLMGTVNIVCPTC) fold into a zinc finger. The Nuclear export signal motif lies at 76–84 (LRTIQQLLM).

Belongs to the papillomaviridae E7 protein family. In terms of assembly, homodimer. Homooligomer. Interacts with host RB1; this interaction induces dissociation of RB1-E2F1 complex thereby disrupting RB1 activity. Interacts with host EP300; this interaction represses EP300 transcriptional activity. Interacts with protein E2; this interaction inhibits E7 oncogenic activity. Interacts with host TMEM173/STING; this interaction impairs the ability of TMEM173/STING to sense cytosolic DNA and promote the production of type I interferon (IFN-alpha and IFN-beta). In terms of processing, highly phosphorylated.

It localises to the host cytoplasm. The protein resides in the host nucleus. In terms of biological role, plays a role in viral genome replication by driving entry of quiescent cells into the cell cycle. Stimulation of progression from G1 to S phase allows the virus to efficiently use the cellular DNA replicating machinery to achieve viral genome replication. E7 protein has both transforming and trans-activating activities. Induces the disassembly of the E2F1 transcription factor from RB1, with subsequent transcriptional activation of E2F1-regulated S-phase genes. Interferes with host histone deacetylation mediated by HDAC1 and HDAC2, leading to transcription activation. Also plays a role in the inhibition of both antiviral and antiproliferative functions of host interferon alpha. Interaction with host TMEM173/STING impairs the ability of TMEM173/STING to sense cytosolic DNA and promote the production of type I interferon (IFN-alpha and IFN-beta). In Human papillomavirus 33, this protein is Protein E7.